The chain runs to 677 residues: Polyunsaturated fatty acid lipoxygenase ALOX8 (677 aa).

Positions 2 to 125 constitute a PLAT domain; the sequence is AKCRVRVSTG…ELVLREGAAK (124 aa). Gly-15, Gly-17, Asp-39, His-40, Gly-42, Glu-44, Asp-86, and Ala-87 together coordinate Ca(2+). The Lipoxygenase domain occupies 126-677; sequence VSWQDHHPTL…PPLIENSVSI (552 aa). His-374, His-379, His-554, and Ile-677 together coordinate Fe cation.

It belongs to the lipoxygenase family. The cofactor is Fe cation. In terms of tissue distribution, expressed in epidermis and brain. No expression found in heart, spleen, liver, skeletal muscle, kidney or testis.

Its subcellular location is the cytoplasm. The protein localises to the cytosol. It localises to the membrane. The catalysed reaction is (9Z,12Z)-octadecadienoate + O2 = (9S)-hydroperoxy-(10E,12Z)-octadecadienoate. It catalyses the reaction (5Z,8Z,11Z,14Z)-eicosatetraenoate + O2 = (8S)-hydroperoxy-(5Z,9E,11Z,14Z)-eicosatetraenoate. The enzyme catalyses (15S)-hydroperoxy-(5Z,8Z,11Z,13E)-eicosatetraenoate + O2 = (8S,15S)-dihydroperoxy-(5Z,9E,11Z,13E)-eicosatetraenoate. It carries out the reaction (8S)-hydroperoxy-(5Z,9E,11Z,14Z)-eicosatetraenoate + O2 = (8S,15S)-dihydroperoxy-(5Z,9E,11Z,13E)-eicosatetraenoate. The catalysed reaction is 1-octadecanoyl-2-(5Z,8Z,11Z,14Z-eicosatetraenoyl)-sn-glycero-3-phosphocholine + O2 = 1-octadecanoyl-2-(15-hydroperoxy-5Z,8Z,11Z,13E-eicosatetraenoyl)-sn-glycero-3-phosphocholine. It catalyses the reaction a 1-acyl-2-(5Z,8Z,11Z,14Z-eicosatetraenoyl)-sn-glycero-3-phospho-(1D-myo-inositol) + O2 = a 1-acyl-2-(15-hydroperoxy-5Z,8Z,11Z,13E-eicosatetraenoyl)-sn-glycero-3-phospho-(1D-myo-inositol). The enzyme catalyses a 1-acyl-2-(8Z,11Z,14Z-eicosatrienoyl)-sn-glycero-3-phospho-(1D-myo-inositol) + O2 = a 1-acyl-2-(15-hydroperoxy-8Z,11Z,13E-eicosatrienoyl)-sn-glycero-3-phospho-(1D-myo-inositol). It carries out the reaction (5Z,8Z,11Z,14Z)-eicosatetraenoate + O2 = 9-hydroperoxy-(5Z,7E,11Z,14Z)-eicosatetraenoate. The catalysed reaction is (5Z,8Z,11Z,14Z)-eicosatetraenoate + O2 = 11-hydroperoxy-(5Z,8Z,12E,14Z)-eicosatetraenoate. It catalyses the reaction (8Z,11Z,14Z)-eicosatrienoate + O2 = 15-hydroperoxy-(8Z,11Z,13E)-eicosatrienoate. It functions in the pathway lipid metabolism; hydroperoxy eicosatetraenoic acid biosynthesis. In terms of biological role, non-heme iron-containing dioxygenase that catalyzes the stereo-specific peroxidation of free and esterified polyunsaturated fatty acids generating a spectrum of bioactive lipid mediators. Catalyzes the peroxidation of arachidonate and linoleate into (8S)-HPETE and (9S)-HPODE respectively. In addition to generate (8S)-HPETE from free arachidonic acid (AA), may produce other HETE isomers from phospholipid-esterified polyunsaturated fatty acids and minor products derived from (8S)-HPETE itself that may include leukotriene A4 and 8,15-diHPETE. With free arachidonate as substrate, has no detectable 15S-lipoxygenase activity and only displays a 8S-lipoxygenase activity. However may have a 15S-lipoxygenase activity with (8S)-HPETE to produce (8S,15S)-diHPETE and when oxidizes directly arachidonic acid esterified to membrane-bound phospholipids to produce a phospholipid-esterified 15-HpETE. May also catalyze (15S)-HPETE peroxidation to produce 8,15-diHPETE. May play a role in keratinocyte differentiation through activation of the peroxisome proliferator activated receptor signaling pathway. This is Polyunsaturated fatty acid lipoxygenase ALOX8 from Mus musculus (Mouse).